We begin with the raw amino-acid sequence, 643 residues long: Threonine--tRNA ligase (643 aa).

The 61-residue stretch at 1–61 (MPIITLPDGS…SEDSSLEIIT (61 aa)) folds into the TGS domain. A catalytic region spans residues 243–534 (DHRRIGKALD…ITEEYAGFFP (292 aa)). Cysteine 334, histidine 385, and histidine 511 together coordinate Zn(2+).

It belongs to the class-II aminoacyl-tRNA synthetase family. In terms of assembly, homodimer. Zn(2+) serves as cofactor.

It localises to the cytoplasm. It catalyses the reaction tRNA(Thr) + L-threonine + ATP = L-threonyl-tRNA(Thr) + AMP + diphosphate + H(+). Functionally, catalyzes the attachment of threonine to tRNA(Thr) in a two-step reaction: L-threonine is first activated by ATP to form Thr-AMP and then transferred to the acceptor end of tRNA(Thr). Also edits incorrectly charged L-seryl-tRNA(Thr). This is Threonine--tRNA ligase from Actinobacillus pleuropneumoniae serotype 5b (strain L20).